The following is a 567-amino-acid chain: uncharacterized protein (567 aa).

Belongs to the protein kinase superfamily. ADCK protein kinase family.

This is an uncharacterized protein from Synechocystis sp. (strain ATCC 27184 / PCC 6803 / Kazusa).